Reading from the N-terminus, the 228-residue chain is 7-cyano-7-deazaguanine synthase (228 aa).

An ATP-binding site is contributed by 7 to 17 (LSGGLDSSTAL). The Zn(2+) site is built by cysteine 190, cysteine 202, cysteine 205, and cysteine 208.

It belongs to the QueC family. The cofactor is Zn(2+).

The catalysed reaction is 7-carboxy-7-deazaguanine + NH4(+) + ATP = 7-cyano-7-deazaguanine + ADP + phosphate + H2O + H(+). The protein operates within purine metabolism; 7-cyano-7-deazaguanine biosynthesis. Catalyzes the ATP-dependent conversion of 7-carboxy-7-deazaguanine (CDG) to 7-cyano-7-deazaguanine (preQ(0)). This chain is 7-cyano-7-deazaguanine synthase, found in Acaryochloris marina (strain MBIC 11017).